The chain runs to 797 residues: G-type lectin S-receptor-like serine/threonine-protein kinase SD2-2 (797 aa).

The signal sequence occupies residues 1–23 (MPCTTYLPLLLLLFLLPPPSVQS). A Bulb-type lectin domain is found at 24-139 (KVIIKGNQTI…DGSPVWQSFD (116 aa)). Residues 24–401 (KVIIKGNQTI…KNSKGNISKS (378 aa)) lie on the Extracellular side of the membrane. N-linked (GlcNAc...) asparagine glycosylation is found at Asn-30, Asn-49, Asn-150, and Asn-197. One can recognise an EGF-like; atypical domain in the interval 274–310 (PEDPCRVYNLCGQLGFCSSELLKPCACIRGFRPRNDA). Disulfide bonds link Cys-278/Cys-290, Cys-284/Cys-298, Cys-359/Cys-381, and Cys-363/Cys-369. The PAN domain maps to 321 to 407 (CRRENGDSGE…ISKSIIILCS (87 aa)). Residues Asn-366 and Asn-397 are each glycosylated (N-linked (GlcNAc...) asparagine). The chain crosses the membrane as a helical span at residues 402 to 422 (IIILCSVVGSISVLGFTLLVP). The Cytoplasmic segment spans residues 423–797 (LILLKRSRKR…SRSSFGRPSP (375 aa)). Positions 461-742 (NGFSDKVGHG…TVVKMLEGVV (282 aa)) constitute a Protein kinase domain. ATP is bound by residues 467–475 (VGHGGFGAV) and Lys-490. Residues 550–566 (SPKLLSWETRFRIALGT) form a caM-binding region. Asp-585 serves as the catalytic Proton acceptor. The segment at 767–797 (GTSCSEGHGCSDLNTGLSSPGSRSSFGRPSP) is disordered. Over residues 784-797 (SSPGSRSSFGRPSP) the composition is skewed to low complexity.

The protein belongs to the protein kinase superfamily. Ser/Thr protein kinase family. In terms of processing, autophosphorylated. In terms of tissue distribution, expressed in the shoot apex and roots, specifically in lateral roots and at the root-hypocotyl transition zone.

It is found in the cell membrane. It carries out the reaction L-seryl-[protein] + ATP = O-phospho-L-seryl-[protein] + ADP + H(+). The enzyme catalyses L-threonyl-[protein] + ATP = O-phospho-L-threonyl-[protein] + ADP + H(+). Its function is as follows. Serine/threonine-protein kinase. In Arabidopsis thaliana (Mouse-ear cress), this protein is G-type lectin S-receptor-like serine/threonine-protein kinase SD2-2 (SD22).